We begin with the raw amino-acid sequence, 1571 residues long: Guanine nucleotide-releasing factor 2 (1571 aa).

Disordered stretches follow at residues 28–85, 202–271, and 287–316; these read LPPH…RDTN, INSG…KLAR, and MRTT…PTTE. Residues 55–73 are compositionally biased toward basic residues; it reads QLHHHHHQQHHHNHHRLWK. Over residues 74–83 the composition is skewed to polar residues; that stretch reads TQRQSWSPRD. The span at 230-248 shows a compositional bias: gly residues; sequence TPGGSSRVGGAGAGGGGGV. Polar residues predominate over residues 287–297; sequence MRTTNNTLGRS. The span at 298–309 shows a compositional bias: basic residues; the sequence is HSPHSPRTKHGT. Phosphoserine is present on residues Ser496 and Ser523. 6 disordered regions span residues 513–580, 614–646, 695–719, 728–747, 776–868, and 879–898; these read HNVN…QASP, RSRS…HQHL, GEGV…ESGF, STQT…SSNS, QRHI…SEVA, and LNHH…HSKH. A Phosphothreonine modification is found at Thr524. Ser526 bears the Phosphoserine mark. Over residues 532 to 550 the composition is skewed to pro residues; the sequence is SPPPKPPLPNRASNPPPLP. Positions 546–556 match the SH3-binding motif; the sequence is PPPLPPKRRSQ. The segment covering 556–579 has biased composition (low complexity); the sequence is QPSASAGTVGVGCSSSTSTSNQAS. Ser615 is subject to Phosphoserine. Over residues 620–631 the composition is skewed to polar residues; the sequence is ENSQCSFDSALN. The span at 697–707 shows a compositional bias: low complexity; that stretch reads GVAAAASGDGE. Residues 708–718 show a composition bias toward polar residues; the sequence is TNSNRHSNESG. 2 stretches are compositionally biased toward low complexity: residues 735-747 and 780-824; these read SVQS…SSNS and SSSS…DLAP. The SH3-binding signature appears at 820-831; sequence ADLAPALPPKSI. Polar residues predominate over residues 851–866; that stretch reads VQSSSGWASHRSSQSE. 2 consecutive short sequence motifs (SH3-binding) follow at residues 924–935 and 986–997; these read DQEPPPLPIKKK and LEMPPALPPKNY. The interval 1013-1038 is disordered; the sequence is PVIVTTPPPSPKPTLGENGSTGRPDS. Positions 1170–1292 constitute an N-terminal Ras-GEF domain; it reads DGPEVKGGYI…LRNKFVEKVT (123 aa). The region spanning 1339 to 1564 is the Ras-GEF domain; it reads KSLEIAEQMT…WQISEKIKPR (226 aa).

As to expression, ubiquitous.

Its function is as follows. Guanine nucleotide-releasing protein that binds to SH3 domain of Crk. Transduces signals from Crk to activate RAS. Also involved in MAPK activation. The polypeptide is Guanine nucleotide-releasing factor 2 (C3G) (Drosophila melanogaster (Fruit fly)).